Consider the following 213-residue polypeptide: uncharacterized protein (213 aa).

This is an uncharacterized protein from Acanthamoeba polyphaga mimivirus (APMV).